A 376-amino-acid chain; its full sequence is Protein RecA (376 aa).

79 to 86 is a binding site for ATP; that stretch reads GPESSGKT. The tract at residues 357 to 376 is disordered; sequence AAARAATDKPVETKGANAAA.

This sequence belongs to the RecA family.

Its subcellular location is the cytoplasm. Can catalyze the hydrolysis of ATP in the presence of single-stranded DNA, the ATP-dependent uptake of single-stranded DNA by duplex DNA, and the ATP-dependent hybridization of homologous single-stranded DNAs. It interacts with LexA causing its activation and leading to its autocatalytic cleavage. In Synechococcus sp. (strain CC9902), this protein is Protein RecA.